The primary structure comprises 725 residues: Polyribonucleotide nucleotidyltransferase (725 aa).

2 residues coordinate Mg(2+): aspartate 506 and aspartate 512. A KH domain is found at 571–631; that stretch reads PLIEQFAIDP…QNIIDACEHI (61 aa). In terms of domain architecture, S1 motif spans 657–724; it reads DEVVIGKVER…KKDRIELSSA (68 aa).

The protein belongs to the polyribonucleotide nucleotidyltransferase family. Mg(2+) serves as cofactor.

It is found in the cytoplasm. It carries out the reaction RNA(n+1) + phosphate = RNA(n) + a ribonucleoside 5'-diphosphate. Functionally, involved in mRNA degradation. Catalyzes the phosphorolysis of single-stranded polyribonucleotides processively in the 3'- to 5'-direction. The polypeptide is Polyribonucleotide nucleotidyltransferase (Aliarcobacter butzleri (strain RM4018) (Arcobacter butzleri)).